The sequence spans 372 residues: Probable L-tyrosine/L-aspartate decarboxylase (372 aa).

Lys215 bears the N6-(pyridoxal phosphate)lysine mark.

This sequence belongs to the group II decarboxylase family. MfnA subfamily. Pyridoxal 5'-phosphate is required as a cofactor.

The catalysed reaction is L-tyrosine + H(+) = tyramine + CO2. The enzyme catalyses L-aspartate + H(+) = beta-alanine + CO2. Its pathway is cofactor biosynthesis; methanofuran biosynthesis. It functions in the pathway cofactor biosynthesis; coenzyme A biosynthesis. In terms of biological role, catalyzes the decarboxylation of L-tyrosine to produce tyramine for methanofuran biosynthesis. Can also catalyze the decarboxylation of L-aspartate to produce beta-alanine for coenzyme A (CoA) biosynthesis. The sequence is that of Probable L-tyrosine/L-aspartate decarboxylase from Methanopyrus kandleri (strain AV19 / DSM 6324 / JCM 9639 / NBRC 100938).